A 216-amino-acid chain; its full sequence is Adenylate kinase (216 aa).

10 to 15 is an ATP binding site; it reads GAGKGT. Residues 30-59 are NMP; the sequence is STGDMLRAAVKAETPVGLKAKAVMEAGQLV. AMP contacts are provided by residues Thr-31, Arg-36, 57 to 59, 85 to 88, and Gln-92; these read QLV and GYPR. The tract at residues 126–164 is LID; it reads GRYTCATCGKGYHDKFEKPAVEGTCDKCGGHEFKRRPDD. Position 127 (Arg-127) interacts with ATP. 4 residues coordinate Zn(2+): Cys-130, Cys-133, Cys-150, and Cys-153. Residues Arg-161 and Arg-172 each contribute to the AMP site. Ala-200 provides a ligand contact to ATP.

Belongs to the adenylate kinase family. As to quaternary structure, monomer.

The protein localises to the cytoplasm. It carries out the reaction AMP + ATP = 2 ADP. Its pathway is purine metabolism; AMP biosynthesis via salvage pathway; AMP from ADP: step 1/1. Catalyzes the reversible transfer of the terminal phosphate group between ATP and AMP. Plays an important role in cellular energy homeostasis and in adenine nucleotide metabolism. The chain is Adenylate kinase from Novosphingobium aromaticivorans (strain ATCC 700278 / DSM 12444 / CCUG 56034 / CIP 105152 / NBRC 16084 / F199).